A 95-amino-acid chain; its full sequence is MKIRPIGDRILIKFKEREEVTKSGIVLPDTVKEKPQIAEVIEVGPGGIVDGEKVEMVVKKGDKVIVSKYAGTEIKIDGEEYTIIRQDDVLAIIED.

It belongs to the GroES chaperonin family. Heptamer of 7 subunits arranged in a ring. Interacts with the chaperonin GroEL.

The protein localises to the cytoplasm. Its function is as follows. Together with the chaperonin GroEL, plays an essential role in assisting protein folding. The GroEL-GroES system forms a nano-cage that allows encapsulation of the non-native substrate proteins and provides a physical environment optimized to promote and accelerate protein folding. GroES binds to the apical surface of the GroEL ring, thereby capping the opening of the GroEL channel. This chain is Co-chaperonin GroES, found in Caldicellulosiruptor bescii (strain ATCC BAA-1888 / DSM 6725 / KCTC 15123 / Z-1320) (Anaerocellum thermophilum).